A 182-amino-acid polypeptide reads, in one-letter code: Large ribosomal subunit protein bL25 (182 aa).

It belongs to the bacterial ribosomal protein bL25 family. CTC subfamily. In terms of assembly, part of the 50S ribosomal subunit; part of the 5S rRNA/L5/L18/L25 subcomplex. Contacts the 5S rRNA. Binds to the 5S rRNA independently of L5 and L18.

Functionally, this is one of the proteins that binds to the 5S RNA in the ribosome where it forms part of the central protuberance. The protein is Large ribosomal subunit protein bL25 of Borreliella afzelii (strain PKo) (Borrelia afzelii).